A 394-amino-acid polypeptide reads, in one-letter code: 8-amino-7-oxononanoate synthase (394 aa).

Arginine 22 is a binding site for substrate. A pyridoxal 5'-phosphate-binding site is contributed by 113–114 (GY). Substrate is bound at residue histidine 138. The pyridoxal 5'-phosphate site is built by serine 184, histidine 212, and threonine 240. N6-(pyridoxal phosphate)lysine is present on lysine 243. Threonine 359 is a substrate binding site.

The protein belongs to the class-II pyridoxal-phosphate-dependent aminotransferase family. BioF subfamily. In terms of assembly, homodimer. The cofactor is pyridoxal 5'-phosphate.

It carries out the reaction 6-carboxyhexanoyl-[ACP] + L-alanine + H(+) = (8S)-8-amino-7-oxononanoate + holo-[ACP] + CO2. It functions in the pathway cofactor biosynthesis; biotin biosynthesis. In terms of biological role, catalyzes the decarboxylative condensation of pimeloyl-[acyl-carrier protein] and L-alanine to produce 8-amino-7-oxononanoate (AON), [acyl-carrier protein], and carbon dioxide. This chain is 8-amino-7-oxononanoate synthase, found in Janthinobacterium sp. (strain Marseille) (Minibacterium massiliensis).